Here is a 561-residue protein sequence, read N- to C-terminus: Sesquiterpene synthase 2 (561 aa).

D313, D317, D458, and E466 together coordinate Mg(2+). The DDXXD motif motif lies at D313–D317.

It belongs to the terpene synthase family. Tpsa subfamily. Mn(2+) serves as cofactor. Mg(2+) is required as a cofactor.

The protein localises to the cytoplasm. It catalyses the reaction (2E,6E)-farnesyl diphosphate + H2O = kunzeaol + diphosphate. It participates in secondary metabolite biosynthesis; terpenoid biosynthesis. Involved in the biosynthesis of kunzeaol. Produces mainly (-)-germacrene D along with gamma-cadinene. The chain is Sesquiterpene synthase 2 (STS2) from Thapsia garganica (Deadly carrot).